The following is a 524-amino-acid chain: Decreased expression in renal and prostate cancer protein (524 aa).

Residues 1–12 (MKEPRIFPRERP) are compositionally biased toward basic and acidic residues. 2 disordered regions span residues 1-43 (MKEP…TGHP) and 64-252 (PFPR…LDAR). Positions 129 to 148 (LNPRTGALPGPGPLSNPRLG) are enriched in low complexity. Gly residues predominate over residues 163 to 181 (GLLGAGPDPRGGGPMGPGS). S302 carries the phosphoserine modification. Over residues 312 to 323 (PMGPNSGPSSRG) the composition is skewed to low complexity. Residues 312 to 332 (PMGPNSGPSSRGIGLPGPNPS) are disordered. The residue at position 364 (R364) is an Asymmetric dimethylarginine. R387 carries the post-translational modification Omega-N-methylarginine. Position 423 is a phosphoserine (S423).

This sequence belongs to the DERPC family. As to expression, ubiquitously expressed, with abundant expression in kidney, skeletal muscle, testis, liver, ovary, and heart and moderate expression in prostate. Expression is significantly reduced in renal and prostate tumors. No differential expression in breast cancer cells, between lobular carcinoma and normal lobules.

It localises to the nucleus. Its function is as follows. Potential tumor suppressor. Inhibits prostate tumor cell growth, when overexpressed. The protein is Decreased expression in renal and prostate cancer protein of Homo sapiens (Human).